Reading from the N-terminus, the 871-residue chain is Bifunctional cordycepin biosynthesis cluster protein 3 (871 aa).

Its pathway is secondary metabolite biosynthesis. Nucleoside/nucleotide kinase; part of the gene cluster that mediates the biosynthesis of cordycepin (COR) and pentostatin (PTN), two adenosine analogs with related bioactivity profiles as both mimic adenosine and can inhibit some of the processes that are adenosine dependent. Within the pathway, cns3 catalyzes both the first step of cordycepin biosynthesis by phosphorylating adenosine into 3'-AMP via its kinase activity and the conversion of adenosine into pentostatin via its ATP phosphoribosyltransferase activity. The first step of cordycepin biosynthesis involves hydroxyl phosphorylation of the 3'-OH position on adenosine to produce adenosine-3'-monophosphate (3'-AMP), catalyzed by kinase activity of cns3. Next, 3'-AMP is dephosphorylated to 2'-carbonyl-3'-deoxyadenosine (2'-C-3'-dA) by cns2, which is finally converted to cordycepin (3'-deoxyadenosine) by the oxidoreductase cns1. This is Bifunctional cordycepin biosynthesis cluster protein 3 from Cordyceps militaris (strain CM01) (Caterpillar fungus).